The chain runs to 170 residues: Transcription factor E (170 aa).

Positions 1 to 93 (MKDAYLYVVE…AWYVDDEIIR (93 aa)) constitute an HTH TFE/IIEalpha-type domain.

Belongs to the TFE family. In terms of assembly, monomer. Interaction with RNA polymerase subunits RpoF and RpoE is necessary for Tfe stimulatory transcription activity. Able to interact with Tbp and RNA polymerase in the absence of DNA promoter. Interacts both with the preinitiation and elongation complexes.

Functionally, transcription factor that plays a role in the activation of archaeal genes transcribed by RNA polymerase. Facilitates transcription initiation by enhancing TATA-box recognition by TATA-box-binding protein (Tbp), and transcription factor B (Tfb) and RNA polymerase recruitment. Not absolutely required for transcription in vitro, but particularly important in cases where Tbp or Tfb function is not optimal. It dynamically alters the nucleic acid-binding properties of RNA polymerases by stabilizing the initiation complex and destabilizing elongation complexes. Seems to translocate with the RNA polymerase following initiation and acts by binding to the non template strand of the transcription bubble in elongation complexes. This chain is Transcription factor E, found in Pyrobaculum arsenaticum (strain DSM 13514 / JCM 11321 / PZ6).